Reading from the N-terminus, the 213-residue chain is ATP phosphoribosyltransferase (213 aa).

It belongs to the ATP phosphoribosyltransferase family. Short subfamily. In terms of assembly, heteromultimer composed of HisG and HisZ subunits.

The protein resides in the cytoplasm. The catalysed reaction is 1-(5-phospho-beta-D-ribosyl)-ATP + diphosphate = 5-phospho-alpha-D-ribose 1-diphosphate + ATP. Its pathway is amino-acid biosynthesis; L-histidine biosynthesis; L-histidine from 5-phospho-alpha-D-ribose 1-diphosphate: step 1/9. In terms of biological role, catalyzes the condensation of ATP and 5-phosphoribose 1-diphosphate to form N'-(5'-phosphoribosyl)-ATP (PR-ATP). Has a crucial role in the pathway because the rate of histidine biosynthesis seems to be controlled primarily by regulation of HisG enzymatic activity. This Teredinibacter turnerae (strain ATCC 39867 / T7901) protein is ATP phosphoribosyltransferase.